We begin with the raw amino-acid sequence, 343 residues long: E3 ubiquitin-protein ligase RNF113A (343 aa).

The residue at position 2 (Ala2) is an N-acetylalanine. The segment at 2-60 (AEQLSPGKTTDQVCTFLFKKPGRKVAAGRRKRPICNQESGDSSSSSDEGNTVVRPEKKR) is important for interaction with SNRNP200/BRR2. Residue Ser6 is modified to Phosphoserine. Positions 23 to 34 (GRKVAAGRRKRP) are enriched in basic residues. The disordered stretch occupies residues 23–95 (GRKVAAGRRK…EEEEENKSES (73 aa)). Low complexity predominate over residues 39–50 (ESGDSSSSSDEG). Residues 50 to 61 (GNTVVRPEKKRA) form an important for interaction with CXCR4 region. Ser84 and Ser85 each carry phosphoserine. The C3H1-type zinc finger occupies 196–224 (DYQPDICKDYKETGFCGFGDSCKFLHDRS). Ser253 carries the post-translational modification Phosphoserine. Residues 262–300 (CFICRQTFQNPVVTKCRHYFCESCALQHFRTTPRCYVCD) form an RING-type zinc finger. Residues 323 to 343 (AEGGGASGFPEDPDEDPVPIT) are disordered. Acidic residues predominate over residues 333-343 (EDPDEDPVPIT).

As to quaternary structure, component of pre-catalytic and catalytic spliceosome complexes. Interacts (via N-terminus) with the spliceosome subunit SNRNP200/BRR2. Component of the minor spliceosome. Within this complex, interacts with SCNM1 and CRIPT.

Its subcellular location is the nucleus. The protein localises to the nucleus speckle. The enzyme catalyses S-ubiquitinyl-[E2 ubiquitin-conjugating enzyme]-L-cysteine + [acceptor protein]-L-lysine = [E2 ubiquitin-conjugating enzyme]-L-cysteine + N(6)-ubiquitinyl-[acceptor protein]-L-lysine.. Its pathway is protein modification; protein ubiquitination. Functionally, required for pre-mRNA splicing as component of the spliceosome. As a component of the minor spliceosome, involved in the splicing of U12-type introns in pre-mRNAs. E3 ubiquitin-protein ligase that catalyzes the transfer of ubiquitin onto target proteins. Catalyzes polyubiquitination of SNRNP200/BRR2 with non-canonical 'Lys-63'-linked polyubiquitin chains. Plays a role in DNA repair via its role in the synthesis of 'Lys-63'-linked polyubiquitin chains that recruit ALKBH3 and the ASCC complex to sites of DNA damage by alkylating agents. Ubiquitinates CXCR4, leading to its degradation, and thereby contributes to the termination of CXCR4 signaling. In Bos taurus (Bovine), this protein is E3 ubiquitin-protein ligase RNF113A (RNF113A).